The following is a 165-amino-acid chain: Nascent polypeptide-associated complex subunit beta (165 aa).

The NAC-A/B domain occupies 33–97 (TTDDKRLQST…PQTKKLQDIL (65 aa)). The segment at 120 to 165 (QKQAPGAGDVPATIQEEDDDDDVPDLVVGETFETPATEEAPKAAAS) is disordered. Residues 134–143 (QEEDDDDDVP) are compositionally biased toward acidic residues. Low complexity predominate over residues 144-165 (DLVVGETFETPATEEAPKAAAS).

The protein belongs to the NAC-beta family. In terms of assembly, part of the nascent polypeptide-associated complex (NAC).

The protein is Nascent polypeptide-associated complex subunit beta of Arabidopsis thaliana (Mouse-ear cress).